The chain runs to 355 residues: Protein RecA (355 aa).

78 to 85 (GPESSGKT) contributes to the ATP binding site.

The protein belongs to the RecA family.

Its subcellular location is the cytoplasm. Can catalyze the hydrolysis of ATP in the presence of single-stranded DNA, the ATP-dependent uptake of single-stranded DNA by duplex DNA, and the ATP-dependent hybridization of homologous single-stranded DNAs. It interacts with LexA causing its activation and leading to its autocatalytic cleavage. This is Protein RecA from Rhodobacter capsulatus (Rhodopseudomonas capsulata).